Consider the following 1287-residue polypeptide: Vacuolating cytotoxin autotransporter (1287 aa).

The first 33 residues, 1-33 (MEIQQTHRKINRPLVSLALVGALVSITPQQSHA), serve as a signal peptide directing secretion. The segment at 326–381 (PPEGGYKDKPNNTPSQSGAKNDKQESSQNNSNTQVINPPNSTQKTEVQPTQVIDGP) is disordered. Over residues 351 to 376 (SSQNNSNTQVINPPNSTQKTEVQPTQ) the composition is skewed to polar residues. Positions 1014-1287 (KYEKPTNVWA…ASNLGMRYSF (274 aa)) constitute an Autotransporter domain.

It is found in the periplasm. Its subcellular location is the secreted. The protein localises to the cell surface. The protein resides in the cell outer membrane. In terms of biological role, induces vacuolation of eukaryotic cells. Causes ulceration and gastric lesions. The chain is Vacuolating cytotoxin autotransporter (vacA) from Helicobacter pylori (Campylobacter pylori).